We begin with the raw amino-acid sequence, 172 residues long: Large ribosomal subunit protein uL10 (172 aa).

Belongs to the universal ribosomal protein uL10 family. As to quaternary structure, part of the ribosomal stalk of the 50S ribosomal subunit. The N-terminus interacts with L11 and the large rRNA to form the base of the stalk. The C-terminus forms an elongated spine to which L12 dimers bind in a sequential fashion forming a multimeric L10(L12)X complex.

In terms of biological role, forms part of the ribosomal stalk, playing a central role in the interaction of the ribosome with GTP-bound translation factors. The protein is Large ribosomal subunit protein uL10 (rplJ) of Chlamydia trachomatis serovar D (strain ATCC VR-885 / DSM 19411 / UW-3/Cx).